We begin with the raw amino-acid sequence, 231 residues long: UPF0653 protein C607.02c (231 aa).

Disordered regions lie at residues 1 to 33, 47 to 68, 93 to 132, and 147 to 178; these read MPTK…VDDN, YHES…KKDY, SFKS…ENFE, and IESR…APPE. The segment covering 9 to 27 has biased composition (basic and acidic residues); the sequence is SVLEAERKKIGLDHAPKED. 2 stretches are compositionally biased toward basic residues: residues 53-67 and 109-119; these read KEIK…KKKD and EKKKIAKRKEK.

This sequence belongs to the UPF0653 family.

The protein localises to the nucleus. The protein resides in the nucleolus. This chain is UPF0653 protein C607.02c, found in Schizosaccharomyces pombe (strain 972 / ATCC 24843) (Fission yeast).